A 1336-amino-acid polypeptide reads, in one-letter code: Aldehyde oxidase 4 (1336 aa).

The 2Fe-2S ferredoxin-type domain occupies 8–95 (DELIFFVNGK…GAAITTVEGV (88 aa)). [2Fe-2S] cluster is bound by residues C47, C52, C55, and C77. Residue Q116 participates in Mo-molybdopterin binding. [2Fe-2S] cluster-binding residues include C117, C120, C152, and C154. C154 provides a ligand contact to Mo-molybdopterin. The 187-residue stretch at 237-423 (FQGKRTTWII…LSIFIPYTAQ (187 aa)) folds into the FAD-binding PCMH-type domain. FAD contacts are provided by residues 265 to 272 (LVMGNTTV), A346, T355, H359, D368, and I413. Mo-molybdopterin contacts are provided by residues 804–805 (AF), L1045, 1086–1089 (GSMG), Q1201, and L1265. E1267 (proton acceptor; for azaheterocycle hydroxylase activity) is an active-site residue.

It belongs to the xanthine dehydrogenase family. Homodimer. The cofactor is [2Fe-2S] cluster. FAD is required as a cofactor. Requires Mo-molybdopterin as cofactor. In terms of tissue distribution, highly expressed in Harderian glands and sebaceous glands with detectable levels in the epidermis and other keratinized epithelia (at protein level). Detected in testis. The expression is 3 times greater in females than in males.

It is found in the cytoplasm. The enzyme catalyses an aldehyde + O2 + H2O = a carboxylate + H2O2 + H(+). The catalysed reaction is retinal + O2 + H2O = retinoate + H2O2 + H(+). It carries out the reaction all-trans-retinal + O2 + H2O = all-trans-retinoate + H2O2 + H(+). In terms of biological role, aldehyde oxidase able to catalyze the oxidation of retinaldehyde into retinoate. Is responsible for the major all-trans-retinaldehyde-metabolizing activity in the Harderian gland, and contributes a significant amount of the same activity in the skin. Is devoid of pyridoxal-oxidizing activity, in contrast to the other aldehyde oxidases. Acts as a negative modulator of the epidermal trophism. May be able to oxidize a wide variety of aldehydes into their corresponding carboxylates and to hydroxylate azaheterocycles. This chain is Aldehyde oxidase 4 (Aox4), found in Mus musculus (Mouse).